The chain runs to 144 residues: Large ribosomal subunit protein uL15 (144 aa).

Positions 1 to 54 (MRLNTIKPGEGSKKTAKRVGRGIGSGLGKTCGRGHKGQKSRSGGFHKVGFEGGQ) are disordered. Residues 21 to 31 (RGIGSGLGKTC) show a composition bias toward gly residues.

Belongs to the universal ribosomal protein uL15 family. In terms of assembly, part of the 50S ribosomal subunit.

Its function is as follows. Binds to the 23S rRNA. The polypeptide is Large ribosomal subunit protein uL15 (Dechloromonas aromatica (strain RCB)).